Consider the following 256-residue polypeptide: Probable septum site-determining protein MinC (256 aa).

The segment at 105-143 is disordered; sequence RRGATAKPEPADEAEPPVAAAAAEAVPEPAPELAPSAPT. Residues 120–142 are compositionally biased toward low complexity; the sequence is PPVAAAAAEAVPEPAPELAPSAP.

It belongs to the MinC family. As to quaternary structure, interacts with MinD and FtsZ.

In terms of biological role, cell division inhibitor that blocks the formation of polar Z ring septums. Rapidly oscillates between the poles of the cell to destabilize FtsZ filaments that have formed before they mature into polar Z rings. Prevents FtsZ polymerization. The sequence is that of Probable septum site-determining protein MinC from Burkholderia vietnamiensis (strain G4 / LMG 22486) (Burkholderia cepacia (strain R1808)).